We begin with the raw amino-acid sequence, 66 residues long: Large ribosomal subunit protein bL35 (66 aa).

Belongs to the bacterial ribosomal protein bL35 family.

This chain is Large ribosomal subunit protein bL35, found in Cereibacter sphaeroides (strain ATCC 17029 / ATH 2.4.9) (Rhodobacter sphaeroides).